The sequence spans 92 residues: Large ribosomal subunit protein bL27 (92 aa).

Residues methionine 1–phenylalanine 9 constitute a propeptide that is removed on maturation.

The protein belongs to the bacterial ribosomal protein bL27 family. Post-translationally, the N-terminus is cleaved by ribosomal processing cysteine protease Prp.

The sequence is that of Large ribosomal subunit protein bL27 from Acetivibrio thermocellus (strain ATCC 27405 / DSM 1237 / JCM 9322 / NBRC 103400 / NCIMB 10682 / NRRL B-4536 / VPI 7372) (Clostridium thermocellum).